Consider the following 119-residue polypeptide: Inner membrane protein YijD (119 aa).

At 1 to 8 (MKQANQDR) the chain is on the cytoplasmic side. Residues 9–28 (GTLLLALVAGLSINGTFAAL) form a helical membrane-spanning segment. Over 29–31 (FSS) the chain is Periplasmic. Residues 32-50 (IVPFSVFPIISLVLTVYCL) traverse the membrane as a helical segment. Residues 51–61 (HQRYLNRTMPV) lie on the Cytoplasmic side of the membrane. The chain crosses the membrane as a helical span at residues 62–84 (GLPGLAAACFILGVLLYSTVVRA). Residues 85-88 (EYPD) are Periplasmic-facing. A helical membrane pass occupies residues 89–108 (IGSNFFPAVLSVIMVFWIGA). At 109-119 (KMRNRKQEVAE) the chain is on the cytoplasmic side.

It localises to the cell inner membrane. This Escherichia coli O6:H1 (strain CFT073 / ATCC 700928 / UPEC) protein is Inner membrane protein YijD (yijD).